We begin with the raw amino-acid sequence, 146 residues long: Hemoglobin subunit beta (146 aa).

A Globin domain is found at 2–146 (QWTAEEKQLI…VAHALARKYH (145 aa)). Residues H63 and H92 each coordinate heme b.

It belongs to the globin family. Heterotetramer of two alpha chains and two beta chains. Red blood cells.

Functionally, involved in oxygen transport from the lung to the various peripheral tissues. The sequence is that of Hemoglobin subunit beta (HBB) from Apus apus (Common swift).